The chain runs to 431 residues: Serine--tRNA ligase (431 aa).

237–239 (TAE) is an L-serine binding site. Residue 268–270 (RSE) coordinates ATP. E291 is an L-serine binding site. ATP is bound at residue 355–358 (EISS). S390 contributes to the L-serine binding site.

The protein belongs to the class-II aminoacyl-tRNA synthetase family. Type-1 seryl-tRNA synthetase subfamily. Homodimer. The tRNA molecule binds across the dimer.

The protein resides in the cytoplasm. The enzyme catalyses tRNA(Ser) + L-serine + ATP = L-seryl-tRNA(Ser) + AMP + diphosphate + H(+). It catalyses the reaction tRNA(Sec) + L-serine + ATP = L-seryl-tRNA(Sec) + AMP + diphosphate + H(+). The protein operates within aminoacyl-tRNA biosynthesis; selenocysteinyl-tRNA(Sec) biosynthesis; L-seryl-tRNA(Sec) from L-serine and tRNA(Sec): step 1/1. Catalyzes the attachment of serine to tRNA(Ser). Is also able to aminoacylate tRNA(Sec) with serine, to form the misacylated tRNA L-seryl-tRNA(Sec), which will be further converted into selenocysteinyl-tRNA(Sec). This chain is Serine--tRNA ligase, found in Neisseria gonorrhoeae (strain ATCC 700825 / FA 1090).